The primary structure comprises 78 residues: Hainantoxin-XX.3 (78 aa).

The N-terminal stretch at 1-23 (MKSATLLALSFLLIASCFLICEA) is a signal peptide. Residues 24–47 (EHSRYEEHEILEENMGDVVNLEQR) constitute a propeptide that is removed on maturation. Disulfide bonds link Cys-49–Cys-62, Cys-56–Cys-66, and Cys-61–Cys-77.

The protein belongs to the hainantoxin family. 20 subfamily. In terms of tissue distribution, expressed by the venom gland.

Its subcellular location is the secreted. Functionally, putative ion channel inhibitor. The chain is Hainantoxin-XX.3 from Cyriopagopus hainanus (Chinese bird spider).